Consider the following 280-residue polypeptide: ESX-1 secretion-associated protein EspJ (280 aa).

S70 carries the phosphoserine modification. Low complexity-rich tracts occupy residues 167–181 (QTISQTAQQAAQSAQ) and 246–280 (PAQAMDTGAGARPAASPLAAPVDPSTPAPSTTTTL). The interval 167 to 280 (QTISQTAQQA…TPAPSTTTTL (114 aa)) is disordered.

As to quaternary structure, residues 76-280 interact with EsxB and an artificial EsxB-EsxA heterodimer. In terms of processing, phosphorylated at Ser-70.

It localises to the secreted. Its function is as follows. Could be involved in regulation of growth and intracellular survival. The sequence is that of ESX-1 secretion-associated protein EspJ from Mycobacterium tuberculosis (strain ATCC 25618 / H37Rv).